The chain runs to 464 residues: ATP synthase subunit beta (464 aa).

152–159 (GGAGVGKT) serves as a coordination point for ATP.

This sequence belongs to the ATPase alpha/beta chains family. In terms of assembly, F-type ATPases have 2 components, CF(1) - the catalytic core - and CF(0) - the membrane proton channel. CF(1) has five subunits: alpha(3), beta(3), gamma(1), delta(1), epsilon(1). CF(0) has three main subunits: a(1), b(2) and c(9-12). The alpha and beta chains form an alternating ring which encloses part of the gamma chain. CF(1) is attached to CF(0) by a central stalk formed by the gamma and epsilon chains, while a peripheral stalk is formed by the delta and b chains.

The protein localises to the cell membrane. It carries out the reaction ATP + H2O + 4 H(+)(in) = ADP + phosphate + 5 H(+)(out). In terms of biological role, produces ATP from ADP in the presence of a proton gradient across the membrane. The catalytic sites are hosted primarily by the beta subunits. In Ureaplasma urealyticum serovar 10 (strain ATCC 33699 / Western), this protein is ATP synthase subunit beta.